An 81-amino-acid polypeptide reads, in one-letter code: Small ribosomal subunit protein bS18 (81 aa).

The protein belongs to the bacterial ribosomal protein bS18 family. Part of the 30S ribosomal subunit. Forms a tight heterodimer with protein bS6.

Binds as a heterodimer with protein bS6 to the central domain of the 16S rRNA, where it helps stabilize the platform of the 30S subunit. The protein is Small ribosomal subunit protein bS18 of Rubrobacter xylanophilus (strain DSM 9941 / JCM 11954 / NBRC 16129 / PRD-1).